Reading from the N-terminus, the 155-residue chain is Small ribosomal subunit protein uS7cz/uS7cy (155 aa).

The protein belongs to the universal ribosomal protein uS7 family. Part of the 30S ribosomal subunit.

The protein localises to the plastid. The protein resides in the chloroplast. In terms of biological role, one of the primary rRNA binding proteins, it binds directly to 16S rRNA where it nucleates assembly of the head domain of the 30S subunit. This is Small ribosomal subunit protein uS7cz/uS7cy (rps7-A) from Drimys granadensis.